A 330-amino-acid chain; its full sequence is Methionyl-tRNA formyltransferase (330 aa).

Serine 116–proline 119 serves as a coordination point for (6S)-5,6,7,8-tetrahydrofolate.

It belongs to the Fmt family.

It carries out the reaction L-methionyl-tRNA(fMet) + (6R)-10-formyltetrahydrofolate = N-formyl-L-methionyl-tRNA(fMet) + (6S)-5,6,7,8-tetrahydrofolate + H(+). Its function is as follows. Attaches a formyl group to the free amino group of methionyl-tRNA(fMet). The formyl group appears to play a dual role in the initiator identity of N-formylmethionyl-tRNA by promoting its recognition by IF2 and preventing the misappropriation of this tRNA by the elongation apparatus. In Nitratidesulfovibrio vulgaris (strain ATCC 29579 / DSM 644 / CCUG 34227 / NCIMB 8303 / VKM B-1760 / Hildenborough) (Desulfovibrio vulgaris), this protein is Methionyl-tRNA formyltransferase.